A 141-amino-acid chain; its full sequence is MERTLTILKPDCVRKQLIGAVIDKIERAGFRVVAMKKTKLTAQTAGEFYAVHSQRPFYGELVEFMSSGPCVPMILEKENAVADFRTLIGATDPAEAAEGTIRNLFADSKGENIIHGSDSAENAQIEAGFFFSTEEAVRVNN.

Residues Lys-9, Phe-57, Arg-85, Thr-91, Arg-102, and Asn-112 each coordinate ATP. Residue His-115 is the Pros-phosphohistidine intermediate of the active site.

The protein belongs to the NDK family. As to quaternary structure, homotetramer. Mg(2+) serves as cofactor.

The protein localises to the cytoplasm. It carries out the reaction a 2'-deoxyribonucleoside 5'-diphosphate + ATP = a 2'-deoxyribonucleoside 5'-triphosphate + ADP. The enzyme catalyses a ribonucleoside 5'-diphosphate + ATP = a ribonucleoside 5'-triphosphate + ADP. In terms of biological role, major role in the synthesis of nucleoside triphosphates other than ATP. The ATP gamma phosphate is transferred to the NDP beta phosphate via a ping-pong mechanism, using a phosphorylated active-site intermediate. The protein is Nucleoside diphosphate kinase of Prosthecochloris aestuarii (strain DSM 271 / SK 413).